We begin with the raw amino-acid sequence, 294 residues long: Universal stress protein MSMEG_3950/MSMEI_3859 (294 aa).

G13 provides a ligand contact to ATP. K109 participates in a covalent cross-link: Isoglutamyl lysine isopeptide (Lys-Gln) (interchain with Q-Cter in protein Pup). ATP-binding positions include 117–123, 131–132, G164, D197, 261–267, and 275–277; these read GNRGMGA, ST, GSHGRGG, and SVS.

It belongs to the universal stress protein A family.

The protein is Universal stress protein MSMEG_3950/MSMEI_3859 of Mycolicibacterium smegmatis (strain ATCC 700084 / mc(2)155) (Mycobacterium smegmatis).